Consider the following 697-residue polypeptide: Phosphate acetyltransferase (697 aa).

The segment at 374 to 697 is phosphate acetyltransferase; sequence LFLYNLVQAA…TVVITALQVK (324 aa).

It in the N-terminal section; belongs to the CobB/CobQ family. The protein in the C-terminal section; belongs to the phosphate acetyltransferase and butyryltransferase family.

It localises to the cytoplasm. The enzyme catalyses acetyl-CoA + phosphate = acetyl phosphate + CoA. Its pathway is metabolic intermediate biosynthesis; acetyl-CoA biosynthesis; acetyl-CoA from acetate: step 2/2. Functionally, involved in acetate metabolism. The chain is Phosphate acetyltransferase (pta) from Synechocystis sp. (strain ATCC 27184 / PCC 6803 / Kazusa).